Here is a 340-residue protein sequence, read N- to C-terminus: Selenide, water dikinase (340 aa).

Residue Cys-13 is part of the active site. Residues Lys-16 and 43 to 45 (ASD) contribute to the ATP site. A Mg(2+)-binding site is contributed by Asp-46. ATP is bound by residues Asp-63, Asp-86, and 133 to 135 (GHS). Asp-86 lines the Mg(2+) pocket. Asp-221 lines the Mg(2+) pocket.

The protein belongs to the selenophosphate synthase 1 family. Class I subfamily. In terms of assembly, homodimer. The cofactor is Mg(2+).

It catalyses the reaction hydrogenselenide + ATP + H2O = selenophosphate + AMP + phosphate + 2 H(+). In terms of biological role, synthesizes selenophosphate from selenide and ATP. In Desulfitobacterium hafniense (strain DSM 10664 / DCB-2), this protein is Selenide, water dikinase.